A 317-amino-acid polypeptide reads, in one-letter code: Adenosine receptor A3 (317 aa).

Topologically, residues 1-14 (MPVNSTAVSLASVT) are extracellular. A glycan (N-linked (GlcNAc...) asparagine) is linked at Asn4. Residues 15–37 (YISVEILIGLCAIVGNVLVIWVV) traverse the membrane as a helical segment. Topologically, residues 38 to 48 (KLNPSLQTTTF) are cytoplasmic. A helical transmembrane segment spans residues 49–72 (YFIVSLALADIAVGVLVMPLAIVI). Topologically, residues 73–84 (SLGVTIHFYSCL) are extracellular. Cys83 and Cys165 are joined by a disulfide. The chain crosses the membrane as a helical span at residues 85–106 (LMTCLLMIFTHASIMSLLAIAV). Over 107 to 126 (DRYLRVKLTVRYRRVTTQRR) the chain is Cytoplasmic. The helical transmembrane segment at 127–148 (IWLALGLCWLVSFLVGLTPMFG) threads the bilayer. Residues 149–176 (WNMKLSSADKNLTFLPCQFRSVMRMDYM) are Extracellular-facing. Residues 177 to 197 (VYFSFFTWILIPLVVMCAIYF) traverse the membrane as a helical segment. Topologically, residues 198–230 (DIFYVIRNRLSQNFSGSKETGAFYGREFKTAKS) are cytoplasmic. A helical transmembrane segment spans residues 231 to 254 (LSLVLFLFALSWLPLSIINCIIYF). Residues 255 to 260 (NGEVPQ) are Extracellular-facing. Residues 261–283 (IVLYLGILLSHANSMMNPIVYAY) form a helical membrane-spanning segment. Residues 284–317 (KIKKFKETYLLILKACVICQPSKSMDPSIEQTSE) lie on the Cytoplasmic side of the membrane. Cys302 carries the S-palmitoyl cysteine lipid modification.

This sequence belongs to the G-protein coupled receptor 1 family. Phosphorylation on Thr-315 and Ser-316 may be crucial for rapid desensitization. Phosphorylation on Thr-315 may be necessary for phosphorylation on Ser-316 to occur.

Its subcellular location is the cell membrane. Functionally, receptor for adenosine. The activity of this receptor is mediated by G proteins which inhibits adenylyl cyclase. This is Adenosine receptor A3 (ADORA3) from Bos taurus (Bovine).